We begin with the raw amino-acid sequence, 67 residues long: Probable Sec-independent protein translocase protein TatE (67 aa).

A helical transmembrane segment spans residues 4 to 21 (ISITKLLVVAALVVLLFG).

This sequence belongs to the TatA/E family. TatE subfamily.

The protein localises to the cell inner membrane. Functionally, part of the twin-arginine translocation (Tat) system that transports large folded proteins containing a characteristic twin-arginine motif in their signal peptide across membranes. TatE shares overlapping functions with TatA. The polypeptide is Probable Sec-independent protein translocase protein TatE (Enterobacter cloacae subsp. cloacae (strain ATCC 13047 / DSM 30054 / NBRC 13535 / NCTC 10005 / WDCM 00083 / NCDC 279-56)).